A 480-amino-acid polypeptide reads, in one-letter code: Alpha-glucosidase (480 aa).

Valine 4 to serine 70 is an NAD(+) binding site. Positions 119 and 153 each coordinate substrate. Position 174 (cysteine 174) interacts with Mn(2+). The Proton donor role is filled by histidine 175. Histidine 203 contacts Mn(2+). The Proton acceptor role is filled by aspartate 260.

It belongs to the glycosyl hydrolase 4 family. In terms of assembly, homodimer. Requires NAD(+) as cofactor. Mn(2+) is required as a cofactor.

The catalysed reaction is Hydrolysis of terminal, non-reducing (1-&gt;4)-linked alpha-D-glucose residues with release of alpha-D-glucose.. Inhibited by EDTA in vitro. In terms of biological role, is able to hydrolyze diverse types of alpha-glycoside bonds in di- and trisaccharides: alpha-1,4 bonds of maltose and maltotriose, alpha-1,1 bonds of trehalose, alpha-1,2 bonds of sucrose, alpha-1,3 bonds of turanose and melizitose, alpha-1,6 bonds of isomaltose and melibiose. AglA is not specific with respect to the configuration at the C-4 position of its substrates because it also possesses alpha-galactosidase activity. Acts on the substrate from the non-reducing end of the chain. The activity of AglA drops with increasing length of the saccharide chain. Does not hydrolyze alpha-, beta-, and gamma-cyclodextrins or polysaccharides (starch, pullulan, amylose, amylopectin, glycogen). Does not cleave beta-glycosidic bonds in di-, oligo-, or polysaccharides. This Thermotoga neapolitana protein is Alpha-glucosidase (aglA).